The primary structure comprises 280 residues: Dual adapter for phosphotyrosine and 3-phosphotyrosine and 3-phosphoinositide (280 aa).

Residues 35 to 129 (WYHGNLTRHA…GTLMVLKHPY (95 aa)) form the SH2 domain. Tyrosine 139 is subject to Phosphotyrosine. Serine 141 is subject to Phosphoserine. One can recognise a PH domain in the interval 164-259 (LGTKEGYLTK…WIKILRWKLS (96 aa)).

In terms of assembly, interacts with PtdIns(3,4,5)P3 and PLCG2. Post-translationally, phosphorylated on tyrosine residues.

The protein localises to the cytoplasm. The protein resides in the membrane. Its function is as follows. May act as a B-cell-associated adapter that regulates B-cell antigen receptor (BCR)-signaling downstream of PI3K. This is Dual adapter for phosphotyrosine and 3-phosphotyrosine and 3-phosphoinositide (Dapp1) from Mus musculus (Mouse).